A 331-amino-acid polypeptide reads, in one-letter code: Phenylalanine--tRNA ligase alpha subunit (331 aa).

A Mg(2+)-binding site is contributed by Glu252.

It belongs to the class-II aminoacyl-tRNA synthetase family. Phe-tRNA synthetase alpha subunit type 1 subfamily. Tetramer of two alpha and two beta subunits. Mg(2+) is required as a cofactor.

It localises to the cytoplasm. It carries out the reaction tRNA(Phe) + L-phenylalanine + ATP = L-phenylalanyl-tRNA(Phe) + AMP + diphosphate + H(+). This chain is Phenylalanine--tRNA ligase alpha subunit, found in Xanthomonas oryzae pv. oryzae (strain MAFF 311018).